The primary structure comprises 443 residues: Deoxyguanosinetriphosphate triphosphohydrolase-like protein (443 aa).

An HD domain is found at 66-259; the sequence is RLTHSLEAAQ…MELADDIAYG (194 aa).

Belongs to the dGTPase family. Type 2 subfamily.

In Vibrio vulnificus (strain CMCP6), this protein is Deoxyguanosinetriphosphate triphosphohydrolase-like protein.